The sequence spans 512 residues: Cytochrome P450 26B1 (512 aa).

Residue cysteine 441 coordinates heme.

It belongs to the cytochrome P450 family. Requires heme as cofactor. In terms of tissue distribution, highly expressed in brain, particularly in the cerebellum and pons.

The protein localises to the endoplasmic reticulum membrane. It localises to the microsome membrane. It catalyses the reaction all-trans-retinoate + reduced [NADPH--hemoprotein reductase] + O2 = all-trans-4-hydroxyretinoate + oxidized [NADPH--hemoprotein reductase] + H2O + H(+). The enzyme catalyses all-trans-retinoate + reduced [NADPH--hemoprotein reductase] + O2 = all-trans-18-hydroxyretinoate + oxidized [NADPH--hemoprotein reductase] + H2O + H(+). In terms of biological role, a cytochrome P450 monooxygenase involved in the metabolism of retinoates (RAs), the active metabolites of vitamin A, and critical signaling molecules in animals. RAs exist as at least four different isomers: all-trans-RA (atRA), 9-cis-RA, 13-cis-RA, and 9,13-dicis-RA, where atRA is considered to be the biologically active isomer, although 9-cis-RA and 13-cis-RA also have activity. Catalyzes the hydroxylation of atRA primarily at C-4 and C-18, thereby contributing to the regulation of atRA homeostasis and signaling. Hydroxylation of atRA limits its biological activity and initiates a degradative process leading to its eventual elimination. Involved in the convertion of atRA to all-trans-4-oxo-RA. Can oxidize all-trans-13,14-dihydroretinoate (DRA) to metabolites which could include all-trans-4-oxo-DRA, all-trans-4-hydroxy-DRA, all-trans-5,8-epoxy-DRA, and all-trans-18-hydroxy-DRA. Shows preference for the following substrates: atRA &gt; 9-cis-RA &gt; 13-cis-RA. Plays a central role in germ cell development: acts by degrading RAs in the developing testis, preventing STRA8 expression, thereby leading to delay of meiosis. Required for the maintenance of the undifferentiated state of male germ cells during embryonic development in Sertoli cells, inducing arrest in G0 phase of the cell cycle and preventing meiotic entry. Plays a role in skeletal development, both at the level of patterning and in the ossification of bone and the establishment of some synovial joints. Essential for postnatal survival. Also has a significant activity in oxidation of tazarotenic acid and may therefore metabolize that xenobiotic in vivo. The protein is Cytochrome P450 26B1 (CYP26B1) of Homo sapiens (Human).